Consider the following 111-residue polypeptide: Prothymosin alpha (111 aa).

Methionine 1 is modified (N-acetylmethionine). A disordered region spans residues 1–111 (MSDAAVDTSS…TKKQKTEEDD (111 aa)). Residue serine 2 is modified to N-acetylserine; in Prothymosin alpha, N-terminally processed. A Phosphoserine modification is found at serine 2. Threonine 8 is subject to Phosphothreonine. Phosphoserine occurs at positions 9 and 10. 2 positions are modified to phosphothreonine: threonine 13 and threonine 14. Residues 13–31 (TTKDLKEKKEVVEEAENGR) are compositionally biased toward basic and acidic residues. At lysine 15 the chain carries N6-acetyllysine; alternate. Lysine 15 bears the N6-succinyllysine; alternate mark. Residues 43–84 (ENGEQEADNEVDEEEEEGGEEEEEEEEGDGEEEDGDEDEEAE) are compositionally biased toward acidic residues. Residues 101 to 111 (DTKKQKTEEDD) show a composition bias toward basic and acidic residues. The residue at position 102 (threonine 102) is a Phosphothreonine. Position 103 is an N6-acetyllysine; alternate (lysine 103). A Glycyl lysine isopeptide (Lys-Gly) (interchain with G-Cter in SUMO2); alternate cross-link involves residue lysine 103. Residue threonine 107 is modified to Phosphothreonine.

This sequence belongs to the pro/parathymosin family. Interacts with NUPR1; regulates apoptotic process. In terms of processing, covalently linked to a small RNA of about 20 nucleotides.

Its subcellular location is the nucleus. Functionally, prothymosin alpha may mediate immune function by conferring resistance to certain opportunistic infections. The polypeptide is Prothymosin alpha (Ptma) (Mus musculus (Mouse)).